We begin with the raw amino-acid sequence, 430 residues long: tRNA(Ile)-lysidine synthase (430 aa).

21 to 26 (SGGLDS) provides a ligand contact to ATP.

It belongs to the tRNA(Ile)-lysidine synthase family.

The protein localises to the cytoplasm. It catalyses the reaction cytidine(34) in tRNA(Ile2) + L-lysine + ATP = lysidine(34) in tRNA(Ile2) + AMP + diphosphate + H(+). Functionally, ligates lysine onto the cytidine present at position 34 of the AUA codon-specific tRNA(Ile) that contains the anticodon CAU, in an ATP-dependent manner. Cytidine is converted to lysidine, thus changing the amino acid specificity of the tRNA from methionine to isoleucine. The protein is tRNA(Ile)-lysidine synthase of Salmonella newport (strain SL254).